The following is a 265-amino-acid chain: Pre-mRNA-splicing factor cwf15 (265 aa).

Disordered stretches follow at residues 1-31 (MTTA…ALPA) and 62-197 (AAHF…ALEQ). Residues 113–125 (EADEDASDSDDSV) are compositionally biased toward acidic residues. Residues 143–155 (SNSQESVDSSNSE) show a composition bias toward low complexity. Positions 155–205 (ESSDEESDSEDETQQLLRELENIKQERKREQMLQEEKNRALEQEKREREIA) form a coiled coil. The segment covering 156 to 167 (SSDEESDSEDET) has biased composition (acidic residues). Basic and acidic residues predominate over residues 172 to 197 (RELENIKQERKREQMLQEEKNRALEQ).

This sequence belongs to the CWC15 family. Belongs to the 40S cdc5-associated complex (or cwf complex), a spliceosome sub-complex reminiscent of a late-stage spliceosome composed of the U2, U5 and U6 snRNAs and at least brr2, cdc5, cwf2/prp3, cwf3/syf1, cwf4/syf3, cwf5/ecm2, spp42/cwf6, cwf7/spf27, cwf8, cwf9, cwf10, cwf11, cwf12, prp45/cwf13, cwf14, cwf15, cwf16, cwf17, cwf18, cwf19, cwf20, cwf21, cwf22, cwf23, cwf24, cwf25, cwf26, cyp7/cwf27, cwf28, cwf29/ist3, lea1, msl1, prp5/cwf1, prp10, prp12/sap130, prp17, prp22, sap61, sap62, sap114, sap145, slu7, smb1, smd1, smd3, smf1, smg1 and syf2.

The protein resides in the nucleus. Involved in pre-mRNA splicing. The sequence is that of Pre-mRNA-splicing factor cwf15 (cwf15) from Schizosaccharomyces pombe (strain 972 / ATCC 24843) (Fission yeast).